We begin with the raw amino-acid sequence, 199 residues long: NAD(P)H dehydrogenase (quinone) (199 aa).

In terms of domain architecture, Flavodoxin-like spans 4–190 (MLVLYYSAYG…DGARFQGRRV (187 aa)). FMN-binding positions include 10-15 (SAYGYM) and 78-80 (TRY). Tyr-12 contributes to the NAD(+) binding site. Trp-98 provides a ligand contact to substrate. FMN-binding positions include 113 to 119 (STATQHG) and His-134. The interval 157–181 (GGAPYGMTTTADGDGSRQPSAQELD) is disordered. A compositionally biased stretch (polar residues) spans 163-177 (MTTTADGDGSRQPSA).

The protein belongs to the WrbA family. The cofactor is FMN.

It carries out the reaction a quinone + NADH + H(+) = a quinol + NAD(+). It catalyses the reaction a quinone + NADPH + H(+) = a quinol + NADP(+). The protein is NAD(P)H dehydrogenase (quinone) of Brucella melitensis biotype 2 (strain ATCC 23457).